Here is a 790-residue protein sequence, read N- to C-terminus: Phenylalanine--tRNA ligase beta subunit (790 aa).

Positions Ala-39–Arg-147 constitute a tRNA-binding domain. The region spanning Pro-400 to Val-476 is the B5 domain. The Mg(2+) site is built by Asp-454, Asp-460, Glu-463, and Glu-464. The FDX-ACB domain maps to Ser-696 to Arg-789.

Belongs to the phenylalanyl-tRNA synthetase beta subunit family. Type 1 subfamily. In terms of assembly, tetramer of two alpha and two beta subunits. Mg(2+) is required as a cofactor.

Its subcellular location is the cytoplasm. It carries out the reaction tRNA(Phe) + L-phenylalanine + ATP = L-phenylalanyl-tRNA(Phe) + AMP + diphosphate + H(+). The sequence is that of Phenylalanine--tRNA ligase beta subunit from Hahella chejuensis (strain KCTC 2396).